Reading from the N-terminus, the 337-residue chain is Putative high mobility group B protein 11 (337 aa).

Residues 34 to 125 form the ARID domain; that stretch reads VRNPELFWEM…MLFEFEHLYY (92 aa). Disordered stretches follow at residues 197-221 and 298-337; these read TKRG…QRTG and AGTS…EVSQ. A DNA-binding region (HMG box) is located at residues 215–282; the sequence is PKRQRTGYNF…RYKMEILQYR (68 aa). Residues 319-329 show a composition bias toward low complexity; sequence TDACTSASSAA.

It belongs to the HMGB family.

It is found in the nucleus. Binds preferentially DNA with A/T-rich content. This chain is Putative high mobility group B protein 11 (HMGB11), found in Arabidopsis thaliana (Mouse-ear cress).